The chain runs to 277 residues: Putative hydro-lyase SCO1412 (277 aa).

It belongs to the D-glutamate cyclase family.

The chain is Putative hydro-lyase SCO1412 from Streptomyces coelicolor (strain ATCC BAA-471 / A3(2) / M145).